We begin with the raw amino-acid sequence, 348 residues long: Sulfate/thiosulfate import ATP-binding protein CysA (348 aa).

The 235-residue stretch at Ile-3–Val-237 folds into the ABC transporter domain. Residue Gly-35–Thr-42 coordinates ATP.

Belongs to the ABC transporter superfamily. Sulfate/tungstate importer (TC 3.A.1.6) family. The complex is composed of two ATP-binding proteins (CysA), two transmembrane proteins (CysT and CysW) and a solute-binding protein (CysP).

It localises to the cell inner membrane. It carries out the reaction sulfate(out) + ATP + H2O = sulfate(in) + ADP + phosphate + H(+). The enzyme catalyses thiosulfate(out) + ATP + H2O = thiosulfate(in) + ADP + phosphate + H(+). Part of the ABC transporter complex CysAWTP involved in sulfate/thiosulfate import. Responsible for energy coupling to the transport system. The sequence is that of Sulfate/thiosulfate import ATP-binding protein CysA from Xylella fastidiosa (strain Temecula1 / ATCC 700964).